A 1230-amino-acid chain; its full sequence is ATP-dependent helicase/nuclease subunit A (1230 aa).

Residues 9 to 480 (STWTDDQWKA…IDLNKNFRSR (472 aa)) form the UvrD-like helicase ATP-binding domain. 30–37 (AAAGSGKT) contacts ATP. Residues 507–796 (QAELKLGASY…RLMTIHSSKG (290 aa)) form the UvrD-like helicase C-terminal domain.

Belongs to the helicase family. AddA subfamily. Heterodimer of AddA and AddB/RexB. Requires Mg(2+) as cofactor.

It carries out the reaction Couples ATP hydrolysis with the unwinding of duplex DNA by translocating in the 3'-5' direction.. The enzyme catalyses ATP + H2O = ADP + phosphate + H(+). Its function is as follows. The heterodimer acts as both an ATP-dependent DNA helicase and an ATP-dependent, dual-direction single-stranded exonuclease. Recognizes the chi site generating a DNA molecule suitable for the initiation of homologous recombination. The AddA nuclease domain is required for chi fragment generation; this subunit has the helicase and 3' -&gt; 5' nuclease activities. This chain is ATP-dependent helicase/nuclease subunit A, found in Bacillus licheniformis (strain ATCC 14580 / DSM 13 / JCM 2505 / CCUG 7422 / NBRC 12200 / NCIMB 9375 / NCTC 10341 / NRRL NRS-1264 / Gibson 46).